A 95-amino-acid polypeptide reads, in one-letter code: MALERCDVEKIAHLARLGLNDGELPRITDALNSILGLVDQMQAVDTTGIEPLAHPLEASQRLRPDQVTESNQRDAYQAIAPSTESGLYLVPKVIE.

Belongs to the GatC family. Heterotrimer of A, B and C subunits.

It carries out the reaction L-glutamyl-tRNA(Gln) + L-glutamine + ATP + H2O = L-glutaminyl-tRNA(Gln) + L-glutamate + ADP + phosphate + H(+). It catalyses the reaction L-aspartyl-tRNA(Asn) + L-glutamine + ATP + H2O = L-asparaginyl-tRNA(Asn) + L-glutamate + ADP + phosphate + 2 H(+). Allows the formation of correctly charged Asn-tRNA(Asn) or Gln-tRNA(Gln) through the transamidation of misacylated Asp-tRNA(Asn) or Glu-tRNA(Gln) in organisms which lack either or both of asparaginyl-tRNA or glutaminyl-tRNA synthetases. The reaction takes place in the presence of glutamine and ATP through an activated phospho-Asp-tRNA(Asn) or phospho-Glu-tRNA(Gln). In Pseudomonas putida (strain ATCC 700007 / DSM 6899 / JCM 31910 / BCRC 17059 / LMG 24140 / F1), this protein is Aspartyl/glutamyl-tRNA(Asn/Gln) amidotransferase subunit C.